A 201-amino-acid chain; its full sequence is Cytochrome c biogenesis ATP-binding export protein CcmA (201 aa).

An ABC transporter domain is found at 3-200 (LIAENLGGER…EGAELRMGVA (198 aa)). Position 35 to 42 (35 to 42 (GPNGSGKS)) interacts with ATP.

Belongs to the ABC transporter superfamily. CcmA exporter (TC 3.A.1.107) family. In terms of assembly, the complex is composed of two ATP-binding proteins (CcmA) and two transmembrane proteins (CcmB).

It localises to the cell inner membrane. The catalysed reaction is heme b(in) + ATP + H2O = heme b(out) + ADP + phosphate + H(+). Functionally, part of the ABC transporter complex CcmAB involved in the biogenesis of c-type cytochromes; once thought to export heme, this seems not to be the case, but its exact role is uncertain. Responsible for energy coupling to the transport system. In Mesorhizobium japonicum (strain LMG 29417 / CECT 9101 / MAFF 303099) (Mesorhizobium loti (strain MAFF 303099)), this protein is Cytochrome c biogenesis ATP-binding export protein CcmA.